Reading from the N-terminus, the 505-residue chain is T-cell activation GTPase-activating protein 1 (505 aa).

Disordered stretches follow at residues 81–147 (DDSL…SESS), 160–212 (QQDR…DPFT), 242–293 (QGHI…QREI), 311–339 (RTSSIGSEKSKDFSRDQLQKDLRKESQLS), and 414–441 (KPSTAVPPVPSHHGGDLSEGTPGGHRLS). Over residues 90–102 (SDVSTLQNDSAYD) the composition is skewed to polar residues. A compositionally biased stretch (acidic residues) spans 203-212 (EGDEAEDPFT). Positions 250–262 (SRSSPGESLGSSP) are enriched in low complexity. Composition is skewed to basic and acidic residues over residues 283–292 (KTDKTKPQRE) and 318–336 (EKSKDFSRDQLQKDLRKES).

The protein is T-cell activation GTPase-activating protein 1 (Tagap1) of Mus musculus (Mouse).